The primary structure comprises 257 residues: Glucose-1-phosphate cytidylyltransferase (257 aa).

Substrate-binding positions include 6–10, 11–13, K23, S104, R109, and G128; these read LAGGL and GTR. Residues D129 and D234 each coordinate Mg(2+).

The protein belongs to the glucose-1-phosphate cytidylyltransferase family. Homohexamer. Mg(2+) serves as cofactor.

It carries out the reaction alpha-D-glucose 1-phosphate + CTP + H(+) = CDP-D-glucose + diphosphate. It functions in the pathway nucleotide-sugar biosynthesis; CDP-3,6-dideoxy-D-mannose biosynthesis; CDP-3,6-dideoxy-D-mannose from CTP and alpha-D-glucose 1-phosphate: step 1/5. The protein operates within bacterial outer membrane biogenesis; LPS O-antigen biosynthesis. Its function is as follows. Involved in the biosynthesis of the tyvelose, a 3,6-dideoxyhexose found in the O-antigen of the surface lipopolysaccharides. It catalyzes the transfer of a CMP moiety from CTP to glucose 1-phosphate. This enzyme can utilize either CTP or UTP as the nucleotide donor. This is Glucose-1-phosphate cytidylyltransferase (rfbF) from Salmonella typhi.